The primary structure comprises 296 residues: Light-independent protochlorophyllide reductase iron-sulfur ATP-binding protein (296 aa).

Residues 39–44 (GIGKST) and Lys-68 each bind ATP. Residue Ser-43 participates in Mg(2+) binding. Positions 124 and 158 each coordinate [4Fe-4S] cluster. Residue 209 to 210 (NR) participates in ATP binding.

Belongs to the NifH/BchL/ChlL family. Homodimer. Protochlorophyllide reductase is composed of three subunits; ChlL, ChlN and ChlB. [4Fe-4S] cluster is required as a cofactor.

The enzyme catalyses chlorophyllide a + oxidized 2[4Fe-4S]-[ferredoxin] + 2 ADP + 2 phosphate = protochlorophyllide a + reduced 2[4Fe-4S]-[ferredoxin] + 2 ATP + 2 H2O. The protein operates within porphyrin-containing compound metabolism; chlorophyll biosynthesis (light-independent). In terms of biological role, component of the dark-operative protochlorophyllide reductase (DPOR) that uses Mg-ATP and reduced ferredoxin to reduce ring D of protochlorophyllide (Pchlide) to form chlorophyllide a (Chlide). This reaction is light-independent. The L component serves as a unique electron donor to the NB-component of the complex, and binds Mg-ATP. In Synechococcus sp. (strain CC9605), this protein is Light-independent protochlorophyllide reductase iron-sulfur ATP-binding protein.